A 180-amino-acid polypeptide reads, in one-letter code: Transcription factor IBH1-like 1 (180 aa).

Positions 110-160 (KSKSASEEAAAKAKRLVKRRTQGLRNVVPGGELMSNDVLLLQETLDYIVSL) constitute a bHLH domain.

Belongs to the bHLH protein family.

It is found in the nucleus. Functions redundandly with IBH1/BHLH158 in a regulation node known as the incoherent feed-forward loop (FFL). Acts as transcriptional repressor that negatively regulates cell and organ elongation in response to gibberellin (GA) and brassinosteroid (BR) signaling. The chain is Transcription factor IBH1-like 1 from Arabidopsis thaliana (Mouse-ear cress).